The primary structure comprises 454 residues: NADP-specific glutamate dehydrogenase (454 aa).

The residue at position 2 (S2) is an N-acetylserine. K114 is a catalytic residue.

Belongs to the Glu/Leu/Phe/Val dehydrogenases family. Homohexamer.

The enzyme catalyses L-glutamate + NADP(+) + H2O = 2-oxoglutarate + NH4(+) + NADPH + H(+). The polypeptide is NADP-specific glutamate dehydrogenase (GDH) (Neurospora intermedia).